Here is a 1353-residue protein sequence, read N- to C-terminus: DNA-directed RNA polymerase subunit beta' (1353 aa).

A unknown region spans residues 1–117 (MSDNRLFTSV…AFQKLNDLFK (117 aa)). Positions 118-1353 (LYNHFPSISS…SELAEKTNQN (1236 aa)) are DNA-directed RNA polymerase subunit beta'. The Zn(2+) site is built by C189, C191, C203, and C206. Mg(2+)-binding residues include D578, D580, and D582.

This sequence belongs to the RNA polymerase beta' chain family. The RNAP catalytic core consists of 2 alpha, 1 beta, 1 beta' and 1 omega subunit. When a sigma factor is associated with the core the holoenzyme is formed, which can initiate transcription. It depends on Mg(2+) as a cofactor. Zn(2+) serves as cofactor.

The catalysed reaction is RNA(n) + a ribonucleoside 5'-triphosphate = RNA(n+1) + diphosphate. Functionally, DNA-dependent RNA polymerase catalyzes the transcription of DNA into RNA using the four ribonucleoside triphosphates as substrates. This Onion yellows phytoplasma (strain OY-M) protein is DNA-directed RNA polymerase subunit beta'.